A 511-amino-acid chain; its full sequence is Phosphomethylpyrimidine synthase (511 aa).

Residues Asn-127, Met-156, Tyr-185, His-221, Ser-241–Gly-243, Asp-282–Arg-285, and Glu-321 each bind substrate. His-325 contacts Zn(2+). Position 348 (Tyr-348) interacts with substrate. His-389 serves as a coordination point for Zn(2+). 3 residues coordinate [4Fe-4S] cluster: Cys-469, Cys-472, and Cys-477. The segment at Lys-492–Lys-511 is disordered.

The protein belongs to the ThiC family. [4Fe-4S] cluster serves as cofactor.

The catalysed reaction is 5-amino-1-(5-phospho-beta-D-ribosyl)imidazole + S-adenosyl-L-methionine = 4-amino-2-methyl-5-(phosphooxymethyl)pyrimidine + CO + 5'-deoxyadenosine + formate + L-methionine + 3 H(+). Its pathway is cofactor biosynthesis; thiamine diphosphate biosynthesis. Its function is as follows. Catalyzes the synthesis of the hydroxymethylpyrimidine phosphate (HMP-P) moiety of thiamine from aminoimidazole ribotide (AIR) in a radical S-adenosyl-L-methionine (SAM)-dependent reaction. In Leptospira borgpetersenii serovar Hardjo-bovis (strain JB197), this protein is Phosphomethylpyrimidine synthase.